Reading from the N-terminus, the 229-residue chain is Sugar fermentation stimulation protein homolog (229 aa).

It belongs to the SfsA family.

In Caldanaerobacter subterraneus subsp. tengcongensis (strain DSM 15242 / JCM 11007 / NBRC 100824 / MB4) (Thermoanaerobacter tengcongensis), this protein is Sugar fermentation stimulation protein homolog.